A 118-amino-acid polypeptide reads, in one-letter code: Small ribosomal subunit protein uS13 (118 aa).

Positions 93–118 (RGLPVRGQRTKTNARTRKGPRKPIRK) are disordered.

The protein belongs to the universal ribosomal protein uS13 family. As to quaternary structure, part of the 30S ribosomal subunit. Forms a loose heterodimer with protein S19. Forms two bridges to the 50S subunit in the 70S ribosome.

Located at the top of the head of the 30S subunit, it contacts several helices of the 16S rRNA. In the 70S ribosome it contacts the 23S rRNA (bridge B1a) and protein L5 of the 50S subunit (bridge B1b), connecting the 2 subunits; these bridges are implicated in subunit movement. Contacts the tRNAs in the A and P-sites. The chain is Small ribosomal subunit protein uS13 from Pseudomonas fluorescens (strain Pf0-1).